A 75-amino-acid polypeptide reads, in one-letter code: Small ribosomal subunit protein bS18 (75 aa).

It belongs to the bacterial ribosomal protein bS18 family. Part of the 30S ribosomal subunit. Forms a tight heterodimer with protein bS6.

In terms of biological role, binds as a heterodimer with protein bS6 to the central domain of the 16S rRNA, where it helps stabilize the platform of the 30S subunit. This Histophilus somni (strain 129Pt) (Haemophilus somnus) protein is Small ribosomal subunit protein bS18.